The primary structure comprises 363 residues: Neutral protease 2 homolog MEP7 (363 aa).

An N-terminal signal peptide occupies residues 1–19 (MLLCSMVAALAALATPAFS). Positions 20 to 181 (CALPHLDLPE…ARAIQPLDRR (162 aa)) are excised as a propeptide. Disulfide bonds link Cys-187–Cys-259 and Cys-266–Cys-284. His-308 lines the Zn(2+) pocket. Residue Glu-309 is part of the active site. Positions 312 and 323 each coordinate Zn(2+).

It belongs to the peptidase M35 family. It depends on Zn(2+) as a cofactor.

It localises to the secreted. The enzyme catalyses Preferential cleavage of bonds with hydrophobic residues in P1'. Also 3-Asn-|-Gln-4 and 8-Gly-|-Ser-9 bonds in insulin B chain.. Secreted metalloproteinase that allows assimilation of proteinaceous substrates. Shows high activities on basic nuclear substrates such as histone and protamine. May be involved in virulence. The protein is Neutral protease 2 homolog MEP7 (MEP7) of Coccidioides posadasii (strain C735) (Valley fever fungus).